Consider the following 317-residue polypeptide: Putative 2-hydroxyacid dehydrogenase SA2098 (317 aa).

NAD(+)-binding positions include 155–156 (EI), 234–236 (ASR), and Asp260. The active site involves Arg236. The active site involves Glu265. His283 acts as the Proton donor in catalysis. 283–286 (HIGN) provides a ligand contact to NAD(+).

The protein belongs to the D-isomer specific 2-hydroxyacid dehydrogenase family.

The protein is Putative 2-hydroxyacid dehydrogenase SA2098 of Staphylococcus aureus (strain N315).